The sequence spans 491 residues: MTITPPPSDTEVSVLENKNLGRITQIIGPVLDVVFPPGKMPYIYNALIVQGRDTVGKQINVTCEVQQLLGNNRIRAVAMSATDGLKRGMEVIDTGAALSVPVGGATLGRIFNVLGEPIDNLGPVDTRTTSPIHRSAPAFIQLDTQLSIFETGIKVVDLLAPYRRGGKIGLFGGAGVGKTVLIMELINNIAKAHGGVSVFGGVGERTREGNDLYMEMKESRVINEKNIAESKVALVYGQMNEPPGARMRVGLTALTMAEYFRDVNEQDVLLFIDNIFRFVQAGSEVSALLGRMPSAVGYQPTLGTEMGTLQERITSTKEGSITSIQAVYVPADDLTDPAPATTFAHLDATTVLSRGLAAKGIYPAVDPLDSTSTMLQPRIVGEEHYETAQRVKQTLQRYKELQDMIAILGLDEVSEEDRLTVARARKIERFFSQPFFVAEVFTGSPGKYVGLAETIRGFQLILSGELDSLPEQAFYLVGNIDEATAKATNLT.

172–179 (GGAGVGKT) contacts ATP.

This sequence belongs to the ATPase alpha/beta chains family. As to quaternary structure, F-type ATPases have 2 components, CF(1) - the catalytic core - and CF(0) - the membrane proton channel. CF(1) has five subunits: alpha(3), beta(3), gamma(1), delta(1), epsilon(1). CF(0) has four main subunits: a(1), b(1), b'(1) and c(9-12).

It is found in the plastid. The protein resides in the chloroplast thylakoid membrane. The catalysed reaction is ATP + H2O + 4 H(+)(in) = ADP + phosphate + 5 H(+)(out). In terms of biological role, produces ATP from ADP in the presence of a proton gradient across the membrane. The catalytic sites are hosted primarily by the beta subunits. The protein is ATP synthase subunit beta, chloroplastic of Pisum sativum (Garden pea).